The chain runs to 1576 residues: MVDIGLSASGDSTRRKMEAFADCAVEVVPLDLYDSFRAKIAANLQWICAKAYGIDNVPEELKDPFYTDQYEQEHIKPPVIKLLLSSELYCRVCSLILKGDQVAALQGHQPVIQALSRKGIYIMESDDAPVSESDLSCCPIKMSAHMSMIDALMMAYTVEMISIEKVVASVKRFSTFSASKELPYDLEDAMVFWINKVNLKMREILEREQRIKQQVIESPSHPKVRYRRDHPSSRHLPYFPILEDLTKDISDGAALLAVIHFYCPEQMKLDDICLKEVTSMADSVYNIQLLKEFSNEYLNKCFYLTLEDMLYTPLVLKPNIMVFIAELFWWFENVKPEFVHPRDTQELKEAKIVMHPKTSRPQVPISNATKRSFLASPGSTTDSQATAASESCSSNYLQAEDAENGKGCAVFSPSHPLLPLRQKQQKSVKPEESLNHRDQANSLTRADGQPMASIIAWKEKKPRPLSQTFALHHAADDVESTSGDSISLARSISKDSLASNIVNPTPKHQSYPTPIKVLPKSLLGNVDIEDDEEELVAFIRSDDASCPGDLELQSVSSRASSQMSTSRLRRPADLESKPDSFFLEPLMPAVLKPAKEKHMVPKSEEYGEGKQKGFSSKRQNEGNQSFSRKKIINNHTGHDLNRTFTPLSSLESDPLRTDPVQLSIESGNGNFRPLATSSVESSEHGGGFFLHDLNADDDVEDKPSAGNLIMEDPHKPDTTWTVLRPGSENLDVGGCEEVAVSRPVGKYIGEEESVKLQEDLKLKEHDDKDDASGRSSPCLSTISQISSASMASGSMRMTSFAERKFQKLNSYETKSSTSSSQKTTPDGSECCPPPLTTWKQRREQSPGRQNRDHANVLASELVQLHMQLEEKRRVIEAQKKKMESLSARQRLKLGKAAFLHVVKKGKPETVAQPVKPEHGFRDYTKRTPEDIDTVSVNAKVEQYLESIDPGIVSSEVQEAFTDPKLKDPALLEADICNLMADANPEDIDSEIDVNECDLSIEKLNETISTLQQAIMKISQQQEMLMKAPSMAVPPLPSSSQDHKLKPSVQFVEPISPPGMPIVRKTTRFGQGRNARSLRVTEQKLAKEKMQSSSRVITPTNSIETVPHLKSVQPLKSPSVPTEESPVEVVPEQGSASQDKPTTGGFRLHNDNSQRTFVLSTSKDANIISEQMHREVISSSRVAGVSTSESSGKENVPVDERHKSSLIEVDLSDLKEPDEGEEESDHPEKTKDIISDDQKSGVGFFFKDEQKAEDELAKKRAAFLMKQQRKAEEARLRKRQLEAEVEQKRDDARRKAEEDRIRKDEEKARRELIKQEYLRRKQEQILEEQGLGRPKPKPKSKKTRPKSVHREESYSDSGTKYSSTPDNLSSAQSGSSLSLASGATTEAESVHSGGTPSHRVDCVDAPSGMGRHQSRNAERDWENASTASSIASVAEYSGPKLYKEPSSKSNKPLIHNAISHCCLAGKVNEAIKNSTLDELEKCDSNHYIILFRDAGCQFRALYSYYPETEEICKLTGTGPKNITKKMIDKLYKYSSDRKQFTVIPAKTMSASVDALTIHNHLWQAKRPALPKKNSLGK.

Residues glutamate 217–glutamate 332 form the Calponin-homology (CH) domain. Disordered stretches follow at residues histidine 415–aspartate 447, aspartate 549–alanine 572, lysine 595–aspartate 653, and tyrosine 811–aspartate 852. The segment covering valine 428–glutamine 439 has biased composition (basic and acidic residues). Residues serine 554–serine 566 are compositionally biased toward low complexity. Over residues lysine 595–glutamine 611 the composition is skewed to basic and acidic residues. Composition is skewed to polar residues over residues glycine 613 to phenylalanine 626 and arginine 642 to glutamate 651. The segment covering threonine 813 to threonine 824 has biased composition (low complexity). Basic and acidic residues predominate over residues glutamine 840–aspartate 852. 2 coiled-coil regions span residues leucine 857–glutamine 889 and aspartate 992–glutamate 1022. Disordered regions lie at residues leucine 1108–asparagine 1149, serine 1178–aspartate 1236, and arginine 1274–asparagine 1422. Low complexity predominate over residues serine 1116–glutamate 1131. Over residues serine 1178–serine 1189 the composition is skewed to polar residues. Basic and acidic residues-rich tracts occupy residues valine 1195–serine 1204, histidine 1225–aspartate 1236, and arginine 1274–glutamine 1323. A coiled-coil region spans residues glutamate 1254–glutamate 1315. Over residues proline 1333–serine 1346 the composition is skewed to basic residues. Residues serine 1354–asparagine 1366 show a composition bias toward polar residues. A compositionally biased stretch (low complexity) spans leucine 1367–alanine 1382. Residues threonine 1383–threonine 1394 are compositionally biased toward polar residues. The CKK domain maps to glycine 1437 to lysine 1571.

Belongs to the CAMSAP1 family.

The protein resides in the cytoplasm. It is found in the cytoskeleton. Functionally, key microtubule-organizing protein that specifically binds the minus-end of non-centrosomal microtubules and regulates their dynamics and organization. Specifically recognizes growing microtubule minus-ends and stabilizes microtubules. Acts on free microtubule minus-ends that are not capped by microtubule-nucleating proteins or other factors and protects microtubule minus-ends from depolymerization. In contrast to camsap2 and camsap3, tracks along the growing tips of minus-end microtubules without significantly affecting the polymerization rate: binds at the very tip of the microtubules minus-end and acts as a minus-end tracking protein (-TIP) that dissociates from microtubules after allowing tubulin incorporation. Through interaction with spectrin may regulate neurite outgrowth. This is Calmodulin-regulated spectrin-associated protein 1 (camsap1) from Xenopus laevis (African clawed frog).